A 350-amino-acid chain; its full sequence is MSLNLERNSKWMEGSGPQADIVISSRIRLARNLKGLPFPNLMNSDQQARVVSQVSRAIQAPMVFQAVGELKLQPLRELAPVERQILVEKHLISPDLAAGGGEKAVVLRDDEAVSIMVNEEDHLRLQCLLPAMMLHEAWRLADAADDALENELDFAFDQERGYLTACPTNVGTGLRASTMLHLPALVLTRQAGPVLSALTKVGVAVRGLYGEGTEAQGNIFQVSNQITLGRSEEEIINNLSAVTVRLADQEREARELLRRQSRWQLEDRVGRAYGVLTNARILSSQEALQLLSDVRLGAEMKIIRGLDQRLLNQLMVRIQPAFLQFSAGKEMTPMERDVHRAAMVRELLAG.

In terms of domain architecture, Phosphagen kinase C-terminal spans 21–253 (IVISSRIRLA…VRLADQEREA (233 aa)). Residues 24 to 28 (SSRIR), His-90, Arg-124, 175 to 179 (RASTM), and 206 to 211 (RGLYGE) contribute to the ATP site. Residues 336–341 (RDVHRA) carry the RDXXRA motif of the pArg binding pocket involved in allosteric regulation motif.

This sequence belongs to the ATP:guanido phosphotransferase family.

The enzyme catalyses L-arginyl-[protein] + ATP = N(omega)-phospho-L-arginyl-[protein] + ADP + H(+). Appears to be allosterically activated by the binding of pArg-containing polypeptides to the pArg-binding pocket localized in the C-terminal domain of McsB. Catalyzes the specific phosphorylation of arginine residues in proteins. The polypeptide is Protein-arginine kinase (Moorella thermoacetica (strain ATCC 39073 / JCM 9320)).